A 96-amino-acid polypeptide reads, in one-letter code: Large ribosomal subunit protein uL23 (96 aa).

The protein belongs to the universal ribosomal protein uL23 family. Part of the 50S ribosomal subunit. Contacts protein L29, and trigger factor when it is bound to the ribosome.

In terms of biological role, one of the early assembly proteins it binds 23S rRNA. One of the proteins that surrounds the polypeptide exit tunnel on the outside of the ribosome. Forms the main docking site for trigger factor binding to the ribosome. The protein is Large ribosomal subunit protein uL23 of Alkaliphilus oremlandii (strain OhILAs) (Clostridium oremlandii (strain OhILAs)).